The following is a 560-amino-acid chain: Dihydroxy-acid dehydratase (560 aa).

[2Fe-2S] cluster is bound at residue C52. D84 is a binding site for Mg(2+). C125 contributes to the [2Fe-2S] cluster binding site. Residues D126 and K127 each contribute to the Mg(2+) site. At K127 the chain carries N6-carboxylysine. C197 provides a ligand contact to [2Fe-2S] cluster. E448 lines the Mg(2+) pocket. The active-site Proton acceptor is S474.

It belongs to the IlvD/Edd family. Homodimer. [2Fe-2S] cluster is required as a cofactor. Requires Mg(2+) as cofactor.

It catalyses the reaction (2R)-2,3-dihydroxy-3-methylbutanoate = 3-methyl-2-oxobutanoate + H2O. The catalysed reaction is (2R,3R)-2,3-dihydroxy-3-methylpentanoate = (S)-3-methyl-2-oxopentanoate + H2O. It functions in the pathway amino-acid biosynthesis; L-isoleucine biosynthesis; L-isoleucine from 2-oxobutanoate: step 3/4. Its pathway is amino-acid biosynthesis; L-valine biosynthesis; L-valine from pyruvate: step 3/4. Functionally, functions in the biosynthesis of branched-chain amino acids. Catalyzes the dehydration of (2R,3R)-2,3-dihydroxy-3-methylpentanoate (2,3-dihydroxy-3-methylvalerate) into 2-oxo-3-methylpentanoate (2-oxo-3-methylvalerate) and of (2R)-2,3-dihydroxy-3-methylbutanoate (2,3-dihydroxyisovalerate) into 2-oxo-3-methylbutanoate (2-oxoisovalerate), the penultimate precursor to L-isoleucine and L-valine, respectively. This chain is Dihydroxy-acid dehydratase, found in Leptospira borgpetersenii serovar Hardjo-bovis (strain JB197).